A 214-amino-acid chain; its full sequence is Cutinase CUT2 (214 aa).

Positions 1–18 are cleaved as a signal peptide; sequence MQFSLSIATAILAATASA. An intrachain disulfide couples cysteine 40 to cysteine 117. Serine 128 functions as the Nucleophile in the catalytic mechanism. Cysteine 179 and cysteine 186 are disulfide-bonded. Aspartate 183 is a catalytic residue. Histidine 196 functions as the Proton donor/acceptor in the catalytic mechanism.

The protein belongs to the cutinase family. Post-translationally, the 2 disulfide bonds play a critical role in holding the catalytic residues in juxta-position; reduction of the disulfide bridges results in the complete inactivation of the enzyme.

Its subcellular location is the secreted. It carries out the reaction cutin + H2O = cutin monomers.. In terms of biological role, catalyzes the hydrolysis of complex carboxylic polyesters found in the cell wall of plants. Degrades cutin, a macromolecule that forms the structure of the plant cuticle. Required for efficient penetration of the host plant cuticle by the appressorium during the initial stage of fungal infection. The chain is Cutinase CUT2 from Pyricularia oryzae (strain 70-15 / ATCC MYA-4617 / FGSC 8958) (Rice blast fungus).